The primary structure comprises 480 residues: Glutathione reductase (480 aa).

FAD contacts are provided by Ser31 and Gly32. Ser31 contacts glutathione. Arg38 lines the glutathione pocket. FAD is bound by residues Glu51, Thr58, Cys59, and Lys67. A disulfide bridge links Cys59 with Cys64. Tyr121 provides a ligand contact to glutathione. Ala137 is a binding site for FAD. Residues Ile206, Glu209, Arg226, and Gly291 each coordinate NADP(+). Asp331 serves as a coordination point for FAD. Glu337 is a binding site for NADP(+). Position 339 (Thr339) interacts with FAD. Arg347 contributes to the glutathione binding site. Val372 lines the NADP(+) pocket. A glutathione-binding site is contributed by Lys422. His469 is a binding site for FAD. His469 (proton acceptor) is an active-site residue.

Belongs to the class-I pyridine nucleotide-disulfide oxidoreductase family. In terms of assembly, homodimer. FAD serves as cofactor.

It localises to the cytoplasm. It is found in the mitochondrion. The catalysed reaction is 2 glutathione + NADP(+) = glutathione disulfide + NADPH + H(+). In terms of biological role, catalyzes the reduction of glutathione disulfide (GSSG) to reduced glutathione (GSH). Constitutes the major mechanism to maintain a high GSH:GSSG ratio in the cytosol. In Eremothecium gossypii (strain ATCC 10895 / CBS 109.51 / FGSC 9923 / NRRL Y-1056) (Yeast), this protein is Glutathione reductase (GLR1).